The primary structure comprises 476 residues: Aspartyl/glutamyl-tRNA(Asn/Gln) amidotransferase subunit B (476 aa).

It belongs to the GatB/GatE family. GatB subfamily. In terms of assembly, heterotrimer of A, B and C subunits.

It catalyses the reaction L-glutamyl-tRNA(Gln) + L-glutamine + ATP + H2O = L-glutaminyl-tRNA(Gln) + L-glutamate + ADP + phosphate + H(+). It carries out the reaction L-aspartyl-tRNA(Asn) + L-glutamine + ATP + H2O = L-asparaginyl-tRNA(Asn) + L-glutamate + ADP + phosphate + 2 H(+). Its function is as follows. Allows the formation of correctly charged Asn-tRNA(Asn) or Gln-tRNA(Gln) through the transamidation of misacylated Asp-tRNA(Asn) or Glu-tRNA(Gln) in organisms which lack either or both of asparaginyl-tRNA or glutaminyl-tRNA synthetases. The reaction takes place in the presence of glutamine and ATP through an activated phospho-Asp-tRNA(Asn) or phospho-Glu-tRNA(Gln). The protein is Aspartyl/glutamyl-tRNA(Asn/Gln) amidotransferase subunit B of Lactobacillus acidophilus (strain ATCC 700396 / NCK56 / N2 / NCFM).